Consider the following 33-residue polypeptide: Sucrose-6-phosphate hydrolase (33 aa).

15-18 (PLQE) is a substrate binding site. Residue Glu18 is part of the active site.

This sequence belongs to the glycosyl hydrolase 32 family.

The catalysed reaction is Hydrolysis of terminal non-reducing beta-D-fructofuranoside residues in beta-D-fructofuranosides.. It participates in glycan biosynthesis; sucrose metabolism. The sequence is that of Sucrose-6-phosphate hydrolase from Fusobacterium mortiferum.